We begin with the raw amino-acid sequence, 237 residues long: UPF0173 metal-dependent hydrolase BOV_A0561 (237 aa).

It belongs to the UPF0173 family.

The polypeptide is UPF0173 metal-dependent hydrolase BOV_A0561 (Brucella ovis (strain ATCC 25840 / 63/290 / NCTC 10512)).